The chain runs to 790 residues: DNA ligase 1 (790 aa).

The transit peptide at 1-64 directs the protein to the mitochondrion; sequence MLAIRSSNYL…AFDALMSNAR (64 aa). Residues 64–142 are disordered; it reads RAAAKKKTPQ…TGAKKAKTLS (79 aa). Residues 68-75 carry the Nuclear localization signal 1 motif; the sequence is KKKTPQTT. Residues 116 to 128 are compositionally biased toward polar residues; that stretch reads DSANPRSDTSSIA. Positions 337–346 are interaction with target DNA; it reads KLRLGFSGQT. Glutamate 442 contributes to the ATP binding site. Catalysis depends on lysine 444, which acts as the N6-AMP-lysine intermediate. 2 residues coordinate ATP: arginine 449 and arginine 465. Residue glutamate 497 coordinates Mg(2+). The Nuclear localization signal 2 signature appears at 505–512; that stretch reads KKKILPFQ. Positions 518–520 are interaction with target DNA; the sequence is ARK. Glutamate 596 is a Mg(2+) binding site. ATP is bound by residues lysine 601, arginine 614, and lysine 620. The segment at 757–790 is disordered; sequence DKKPEEATSSEQIADLYQAQKHNHPSNEVKGDDD. The span at 781–790 shows a compositional bias: basic and acidic residues; that stretch reads PSNEVKGDDD.

It belongs to the ATP-dependent DNA ligase family. It depends on Mg(2+) as a cofactor. As to expression, expressed in all vegetative and reproductive tissues.

The protein resides in the mitochondrion. It is found in the nucleus. The catalysed reaction is ATP + (deoxyribonucleotide)n-3'-hydroxyl + 5'-phospho-(deoxyribonucleotide)m = (deoxyribonucleotide)n+m + AMP + diphosphate.. Its function is as follows. Essential protein. DNA ligase that seals nicks in double-stranded DNA during DNA replication, DNA recombination and DNA repair. Involved in repair of both single strand breaks (SSBs) and double strand breaks (DSBs). Required in the endosperm for embryogenesis, probably to repair DNA-breaks generated by DME. The chain is DNA ligase 1 (LIG1) from Arabidopsis thaliana (Mouse-ear cress).